Reading from the N-terminus, the 373-residue chain is UPF0725 protein At1g23950 (373 aa).

N-acetylthreonine is present on T2.

It belongs to the UPF0725 (EMB2204) family.

This is UPF0725 protein At1g23950 from Arabidopsis thaliana (Mouse-ear cress).